The chain runs to 236 residues: Aquaporin Z (236 aa).

Transmembrane regions (helical) follow at residues 12-32 and 37-57; these read FFGT…AAGV and IGYA…AYAV. The short motif at 66 to 68 is the NPA 1 element; that stretch reads NPA. The next 3 helical transmembrane spans lie at 92-112, 136-156, and 163-183; these read VVGA…VAGF, AALI…LGAT, and GFAP…SIPV. The NPA 2 motif lies at 189-191; that stretch reads NPA. A helical membrane pass occupies residues 197–217; that stretch reads ALFVGGWALEQLWLFWLAPIA.

This sequence belongs to the MIP/aquaporin (TC 1.A.8) family. In terms of assembly, homotetramer.

It localises to the cell inner membrane. It carries out the reaction H2O(in) = H2O(out). Functionally, channel that permits osmotically driven movement of water in both directions. It is involved in the osmoregulation and in the maintenance of cell turgor during volume expansion in rapidly growing cells. It mediates rapid entry or exit of water in response to abrupt changes in osmolarity. The chain is Aquaporin Z from Bordetella bronchiseptica (strain ATCC BAA-588 / NCTC 13252 / RB50) (Alcaligenes bronchisepticus).